We begin with the raw amino-acid sequence, 241 residues long: Small ribosomal subunit protein uS3 (241 aa).

The region spanning 39–109 is the KH type-2 domain; that stretch reads IRQHVEKNLS…QIRINVIEVS (71 aa). The segment at 215 to 241 is disordered; the sequence is EQAMAAPAPTPRKKRRPQQFEDRSNEE. The segment covering 232–241 has biased composition (basic and acidic residues); it reads QQFEDRSNEE.

This sequence belongs to the universal ribosomal protein uS3 family. In terms of assembly, part of the 30S ribosomal subunit. Forms a tight complex with proteins S10 and S14.

Functionally, binds the lower part of the 30S subunit head. Binds mRNA in the 70S ribosome, positioning it for translation. The protein is Small ribosomal subunit protein uS3 of Crocosphaera subtropica (strain ATCC 51142 / BH68) (Cyanothece sp. (strain ATCC 51142)).